The primary structure comprises 322 residues: Interferon regulatory factor 1 (322 aa).

Positions 5-113 (RMRMRPWLEM…SAVRVYRMLP (109 aa)) form a DNA-binding region, IRF tryptophan pentad repeat. The residue at position 78 (lysine 78) is an N6-acetyllysine. The tract at residues 92-164 (EEVKDQSRNK…STLPDDHSNY (73 aa)) is disordered. The segment covering 146–157 (DTFSDGLSSSTL) has biased composition (polar residues). Residues lysine 276 and lysine 296 each participate in a glycyl lysine isopeptide (Lys-Gly) (interchain with G-Cter in SUMO) cross-link.

It belongs to the IRF family. As to quaternary structure, monomer. Homodimer. Interacts with EP300. Interacts with MYD88. Interacts with PIAS3. Interacts with SPOP. In terms of processing, phosphorylated by CK2 and this positively regulates its activity. Post-translationally, sumoylation represses the transcriptional activity and displays enhanced resistance to protein degradation. Sumoylated by UBE2I/UBC9 and SUMO1. Inactivates the tumor suppressor activity. Elevated levels in tumor cells. Major site is Lys-276. Sumoylation is enhanced by PIAS3. Desumoylated by SENP1 in tumor cells and appears to compete with ubiquitination on C-terminal sites. Ubiquitinated in a SPOP-depedent manner. Appears to compete with sumoylation on C-terminal sites.

The protein localises to the nucleus. It localises to the cytoplasm. With respect to regulation, activated by MYD88. Transcriptional regulator which displays a remarkable functional diversity in the regulation of cellular responses. Regulates transcription of IFN and IFN-inducible genes, host response to viral and bacterial infections, regulation of many genes expressed during hematopoiesis, inflammation, immune responses and cell proliferation and differentiation, regulation of the cell cycle and induction of growth arrest and programmed cell death following DNA damage. Stimulates both innate and acquired immune responses through the activation of specific target genes and can act as a transcriptional activator and repressor regulating target genes by binding to an interferon-stimulated response element (ISRE) in their promoters. Has an essentail role in IFNG-dependent immunity to mycobacteria. Binds to a consensus sequence in gene promoters. Its target genes for transcriptional activation activity include: genes involved in anti-viral response, such as IFN-alpha/beta, RIGI, TNFSF10/TRAIL, ZBP1, OAS1/2, PIAS1/GBP, EIF2AK2/PKR and RSAD2/viperin; antibacterial response, such as GBP2, GBP5 and NOS2/INOS; anti-proliferative response, such as p53/TP53, LOX and CDKN1A; apoptosis, such as BBC3/PUMA, CASP1, CASP7 and CASP8; immune response, such as IL7, IL12A/B and IL15, PTGS2/COX2 and CYBB; DNA damage responses and DNA repair, such as POLQ/POLH; MHC class I expression, such as TAP1, PSMB9/LMP2, PSME1/PA28A, PSME2/PA28B and B2M and MHC class II expression, such as CIITA; metabolic enzymes, such as ACOD1/IRG1. Represses genes involved in anti-proliferative response, such as BIRC5/survivin, CCNB1, CCNE1, CDK1, CDK2 and CDK4 and in immune response, such as FOXP3, IL4, ANXA2 and TLR4. Stimulates p53/TP53-dependent transcription through enhanced recruitment of EP300 leading to increased acetylation of p53/TP53. Plays an important role in immune response directly affecting NK maturation and activity, macrophage production of IL12, Th1 development and maturation of CD8+ T-cells. Also implicated in the differentiation and maturation of dendritic cells and in the suppression of regulatory T (Treg) cells development. Acts as a tumor suppressor and plays a role not only in antagonism of tumor cell growth but also in stimulating an immune response against tumor cells. In Bos taurus (Bovine), this protein is Interferon regulatory factor 1 (IRF1).